The sequence spans 448 residues: ATP-dependent protease ATPase subunit HslU (448 aa).

ATP-binding positions include Ile23, 65–70, Asp263, Glu327, and Arg399; that span reads GIGKTE.

Belongs to the ClpX chaperone family. HslU subfamily. As to quaternary structure, a double ring-shaped homohexamer of HslV is capped on each side by a ring-shaped HslU homohexamer. The assembly of the HslU/HslV complex is dependent on binding of ATP.

It localises to the cytoplasm. Its function is as follows. ATPase subunit of a proteasome-like degradation complex; this subunit has chaperone activity. The binding of ATP and its subsequent hydrolysis by HslU are essential for unfolding of protein substrates subsequently hydrolyzed by HslV. HslU recognizes the N-terminal part of its protein substrates and unfolds these before they are guided to HslV for hydrolysis. The protein is ATP-dependent protease ATPase subunit HslU of Borreliella burgdorferi (strain ATCC 35210 / DSM 4680 / CIP 102532 / B31) (Borrelia burgdorferi).